The primary structure comprises 512 residues: ATP synthase subunit alpha (512 aa).

Residue 170–177 (GDRQTGKT) participates in ATP binding.

It belongs to the ATPase alpha/beta chains family. In terms of assembly, F-type ATPases have 2 components, CF(1) - the catalytic core - and CF(0) - the membrane proton channel. CF(1) has five subunits: alpha(3), beta(3), gamma(1), delta(1), epsilon(1). CF(0) has three main subunits: a(1), b(2) and c(9-12). The alpha and beta chains form an alternating ring which encloses part of the gamma chain. CF(1) is attached to CF(0) by a central stalk formed by the gamma and epsilon chains, while a peripheral stalk is formed by the delta and b chains.

It localises to the cell inner membrane. It catalyses the reaction ATP + H2O + 4 H(+)(in) = ADP + phosphate + 5 H(+)(out). Its function is as follows. Produces ATP from ADP in the presence of a proton gradient across the membrane. The alpha chain is a regulatory subunit. This Solibacter usitatus (strain Ellin6076) protein is ATP synthase subunit alpha.